A 423-amino-acid chain; its full sequence is Maltoporin 1 (423 aa).

The signal sequence occupies residues 1–23; it reads MNTTLRALSVALAAALIAPSAFA.

This sequence belongs to the porin LamB (TC 1.B.3) family. Homotrimer formed of three 18-stranded antiparallel beta-barrels, containing three independent channels.

It is found in the cell outer membrane. The catalysed reaction is beta-maltose(in) = beta-maltose(out). Involved in the transport of maltose and maltodextrins. This chain is Maltoporin 1, found in Klebsiella pneumoniae subsp. pneumoniae (strain ATCC 700721 / MGH 78578).